The following is a 141-amino-acid chain: MSIVIGADAAGLRLKEVVKNFLEKENFHLVDVTAEGQDFVDVTLAVAAEVNKEEQNLGIVIDAYGAGPFMVATKIKGMVAAEVSDERSAYMTRGHNNSRMITMGAQLVGDELAKNIAKGFVNGKYDGGRHQIRVDMLNKMG.

This sequence belongs to the LacAB/RpiB family. As to quaternary structure, heteromultimeric protein consisting of LacA and LacB.

The catalysed reaction is aldehydo-D-galactose 6-phosphate = keto-D-tagatose 6-phosphate. It participates in carbohydrate metabolism; D-galactose 6-phosphate degradation; D-tagatose 6-phosphate from D-galactose 6-phosphate: step 1/1. This is Galactose-6-phosphate isomerase subunit LacA from Streptococcus pneumoniae (strain 70585).